We begin with the raw amino-acid sequence, 385 residues long: Protein-glutamate methylesterase/protein-glutamine glutaminase (385 aa).

The region spanning 20–138 (RVMIVDDSVV…EASAADIFKH (119 aa)) is the Response regulatory domain. 4-aspartylphosphate is present on Asp71. Residues 189–383 (GVTAPRVLLI…PKLVRLFSGD (195 aa)) form the CheB-type methylesterase domain. Active-site residues include Ser201, His229, and Asp325.

This sequence belongs to the CheB family. Phosphorylated by CheA. Phosphorylation of the N-terminal regulatory domain activates the methylesterase activity.

Its subcellular location is the cytoplasm. It carries out the reaction [protein]-L-glutamate 5-O-methyl ester + H2O = L-glutamyl-[protein] + methanol + H(+). It catalyses the reaction L-glutaminyl-[protein] + H2O = L-glutamyl-[protein] + NH4(+). Functionally, involved in chemotaxis. Part of a chemotaxis signal transduction system that modulates chemotaxis in response to various stimuli. Catalyzes the demethylation of specific methylglutamate residues introduced into the chemoreceptors (methyl-accepting chemotaxis proteins or MCP) by CheR. Also mediates the irreversible deamidation of specific glutamine residues to glutamic acid. This Rhodopseudomonas palustris (strain BisB5) protein is Protein-glutamate methylesterase/protein-glutamine glutaminase.